A 156-amino-acid chain; its full sequence is MSRRGTAEKRTAKSDPIFRNRLVNMVVNRIMKDGKKSLAYQILYRAVKKIQQKTETNPLLVLRQAIRRVTPNIGVKTRRNKKGSTRKVPIEIGSKQGRALAIRWLLEASQKRPGRNMAFKLSSELVDAAKGGGGAIRKKEATHRMAEANRALAHFR.

This sequence belongs to the universal ribosomal protein uS7 family. In terms of assembly, part of the 30S ribosomal subunit.

The protein localises to the plastid. It is found in the chloroplast. Its function is as follows. One of the primary rRNA binding proteins, it binds directly to 16S rRNA where it nucleates assembly of the head domain of the 30S subunit. This is Small ribosomal subunit protein uS7cz/uS7cy (rps7-A) from Triticum aestivum (Wheat).